A 399-amino-acid chain; its full sequence is Syndecan (399 aa).

The N-terminal stretch at 1 to 28 (MKPKQKISVEPLLLVAILIGVLVAATHA) is a signal peptide. The segment at 28 to 319 (AQDQKSVKPS…TKGIDHRPNG (292 aa)) is disordered. Topologically, residues 29-340 (QDQKSVKPSA…TSSFFSQPGI (312 aa)) are extracellular. Positions 36-46 (PSAAAPSAAAS) are enriched in low complexity. O-linked (Xyl...) (glycosaminoglycan) serine glycosylation is present at serine 62. A compositionally biased stretch (basic and acidic residues) spans 67–77 (GIHEDLEKDPD). 3 O-linked (Xyl...) (glycosaminoglycan) serine glycosylation sites follow: serine 79, serine 81, and serine 110. Polar residues predominate over residues 99–116 (SHNTRISQSSNSGINTAH). The segment covering 117 to 172 (TPTQTSSTIPTTSTSTPMPTTTPTATTPASTTTAAATQISSFANSSSTTTTTLAPT) has biased composition (low complexity). The N-linked (GlcNAc...) asparagine glycan is linked to asparagine 160. Residues 191–214 (TESSGDGIDADAEDDDEDDGDDKD) show a composition bias toward acidic residues. Residue serine 194 is glycosylated (O-linked (Xyl...) (glycosaminoglycan) serine). Residues 215 to 226 (YDYNKELDKEID) show a composition bias toward basic and acidic residues. The span at 253–270 (DEIDVDGGDEDDNGDSDI) shows a compositional bias: acidic residues. Residues 299-309 (PNTNVNSQPSD) show a composition bias toward polar residues. The helical transmembrane segment at 341–365 (LAAVIGGAVVGLLCAILVVMFIVYR) threads the bilayer. At 366–399 (MRKKDEGSYALDEPKRSPANNSYAKNANNREFYA) the chain is on the cytoplasmic side. Residues 373–399 (SYALDEPKRSPANNSYAKNANNREFYA) are disordered. Residues 383-399 (PANNSYAKNANNREFYA) are compositionally biased toward polar residues.

It belongs to the syndecan proteoglycan family. In terms of tissue distribution, in 13-16 hours embryos, expressed in lymph glands, peripheral and central nervous system and basal surfaces of gut epithelia. Sdc and robo are coexpressed in domains adjacent to slit; in tracheal pits and midline glia cells.

It localises to the membrane. Its function is as follows. Cell surface proteoglycan that bears heparan sulfate. Required for axonal and myotube guidance, is a necessary component of slit/robo signaling and is required in the slit target cells. The sequence is that of Syndecan (Sdc) from Drosophila melanogaster (Fruit fly).